Here is an 89-residue protein sequence, read N- to C-terminus: Large ribosomal subunit protein bL28 (89 aa).

The protein belongs to the bacterial ribosomal protein bL28 family.

This Chlamydia felis (strain Fe/C-56) (Chlamydophila felis) protein is Large ribosomal subunit protein bL28.